Reading from the N-terminus, the 187-residue chain is NADH-quinone oxidoreductase subunit B (187 aa).

4 residues coordinate [4Fe-4S] cluster: cysteine 51, cysteine 52, cysteine 117, and cysteine 149.

It belongs to the complex I 20 kDa subunit family. As to quaternary structure, NDH-1 is composed of 14 different subunits. Subunits NuoB, C, D, E, F, and G constitute the peripheral sector of the complex. It depends on [4Fe-4S] cluster as a cofactor.

It localises to the cell inner membrane. The enzyme catalyses a quinone + NADH + 5 H(+)(in) = a quinol + NAD(+) + 4 H(+)(out). In terms of biological role, NDH-1 shuttles electrons from NADH, via FMN and iron-sulfur (Fe-S) centers, to quinones in the respiratory chain. The immediate electron acceptor for the enzyme in this species is believed to be ubiquinone. Couples the redox reaction to proton translocation (for every two electrons transferred, four hydrogen ions are translocated across the cytoplasmic membrane), and thus conserves the redox energy in a proton gradient. The polypeptide is NADH-quinone oxidoreductase subunit B (Nitratidesulfovibrio vulgaris (strain DSM 19637 / Miyazaki F) (Desulfovibrio vulgaris)).